We begin with the raw amino-acid sequence, 193 residues long: Inner membrane protein p54 (193 aa).

A helical transmembrane segment spans residues 32-52 (YTILIAIVVLVIIIIVLIYLF). The tract at residues 84 to 126 (PQPGTSKPAGATTASVGKPVTGRPATNRPVTDRPATNNPVTDR) is disordered. Repeat copies occupy residues 135 to 138 (AAAS), 139 to 142 (AAAS), 143 to 146 (AAAS), and 147 to 150 (AAAS). The tract at residues 135–150 (AAASAAASAAASAAAS) is 4 X 4 AA tandem repeats of A-A-A-S. Positions 159–171 (YTTVTTQNTASQT) are interaction with host DYNLL1.

Belongs to the asfivirus envelope protein p54 family. Interacts with the host light chain cytoplasmic dynein DYNLL1; this interaction is critical for intracellular microtubule-dependent virus transport toward viral factories.

The protein localises to the virion membrane. It is found in the host cytoplasm. The protein resides in the host cytoskeleton. Its subcellular location is the host endoplasmic reticulum membrane. Inner envelope protein involved, through its interaction with host dynein, in the intracellular microtubule-dependent transport of viral capsid toward viral factories. Seems to induce caspase-3 activation and apoptosis. Plays a role in virion morphogenesis by recruiting and transforming the host ER membranes into the precursors of the viral envelope. Involved in virus attachment to the host cell. The protein is Inner membrane protein p54 of Ornithodoros (relapsing fever ticks).